The sequence spans 124 residues: Small ribosomal subunit protein uS12c (124 aa).

Residues Met-1–Pro-28 are disordered. A compositionally biased stretch (basic residues) spans Ser-10 to Lys-20.

The protein belongs to the universal ribosomal protein uS12 family. In terms of assembly, part of the 30S ribosomal subunit.

It is found in the plastid. Its function is as follows. With S4 and S5 plays an important role in translational accuracy. Located at the interface of the 30S and 50S subunits. The sequence is that of Small ribosomal subunit protein uS12c (rps12) from Prototheca wickerhamii.